A 165-amino-acid polypeptide reads, in one-letter code: Putative pre-16S rRNA nuclease (165 aa).

Belongs to the YqgF nuclease family.

The protein localises to the cytoplasm. Could be a nuclease involved in processing of the 5'-end of pre-16S rRNA. This is Putative pre-16S rRNA nuclease from Rhizobium meliloti (strain 1021) (Ensifer meliloti).